We begin with the raw amino-acid sequence, 515 residues long: uncharacterized protein (515 aa).

The next 3 helical transmembrane spans lie at 1-21 (MSFVVAAPEVVVAAASDLAGI), 165-185 (IGGPGATGLAGGAGGVGGLLF), and 199-219 (GPVGATGGIGGPGGAAVGLFG). A PE domain is found at 1-93 (MSFVVAAPEV…AGAYAGAEAA (93 aa)). The span at 349 to 360 (GGTLIGNGGDGG) shows a compositional bias: gly residues. 2 disordered regions span residues 349–368 (GGTLIGNGGDGGNSVQTDGF) and 463–515 (GVSG…SPGG).

It belongs to the mycobacterial PE family. PGRS subfamily.

It is found in the cell membrane. This is an uncharacterized protein from Mycobacterium tuberculosis (strain CDC 1551 / Oshkosh).